Here is a 348-residue protein sequence, read N- to C-terminus: Pyruvate dehydrogenase E1 component subunit alpha (348 aa).

Residues 1–21 (MAPRKSASVSSRKTAAKPAKK) form a disordered region.

Heterodimer of an alpha and a beta chain. Requires thiamine diphosphate as cofactor.

The enzyme catalyses N(6)-[(R)-lipoyl]-L-lysyl-[protein] + pyruvate + H(+) = N(6)-[(R)-S(8)-acetyldihydrolipoyl]-L-lysyl-[protein] + CO2. The pyruvate dehydrogenase complex catalyzes the overall conversion of pyruvate to acetyl-CoA and CO(2). It contains multiple copies of three enzymatic components: pyruvate dehydrogenase (E1), dihydrolipoamide acetyltransferase (E2) and lipoamide dehydrogenase (E3). This is Pyruvate dehydrogenase E1 component subunit alpha (pdhA) from Rhizobium meliloti (strain 1021) (Ensifer meliloti).